The following is a 362-amino-acid chain: MAPKQDPKPKFQEGERVLCFHGPLLYEAKCVKVAIKDKQVKYFIHYSGWNKKSAVRPRRSEKSLKTREDIVALFPVPEGAPSVHHPLLTSSWDEWVPESRVLKYVDTNLQKQRELQKANQEQYAEGKMRGAAPGKKTSGLQQKNVEVKTKKNKQKTPGNGDGGSTSETPQPPRKKRARVDPTVENEETFMNRVEVKVKIPEELKPWLVDDWDLITRQKQLFYLPAKKNVDSILEDYANYKKSRGNTDNKEYAVNEVVAGIKEYFNVMLGTQLLYKFERPQYAEILADHPDAPMSQVYGAPHLLRLFVRIGAMLAYTPLDEKSLALLLNYLHDFLKYLAKNSATLFSASDYEVAPPEYHRKAV.

A Tudor-knot domain is found at 12–51; the sequence is QEGERVLCFHGPLLYEAKCVKVAIKDKQVKYFIHYSGWNK. The interval 26-62 is interaction with KAT8; sequence YEAKCVKVAIKDKQVKYFIHYSGWNKKSAVRPRRSEK. The segment at 113–182 is disordered; sequence RELQKANQEQ…RKKRARVDPT (70 aa). Residues 133 to 266 form a sufficient for interaction with SIN3A region; that stretch reads PGKKTSGLQQ…VAGIKEYFNV (134 aa). The short motif at 135-146 is the Nuclear localization signal element; sequence KKTSGLQQKNVE. Lys-143 is subject to N6-acetyllysine. An interaction with RB1-1 region spans residues 164-230; the sequence is STSETPQPPR…FYLPAKKNVD (67 aa). The interval 188–342 is sufficient for interaction with PHF12; the sequence is TFMNRVEVKV…FLKYLAKNSA (155 aa). The 172-residue stretch at 191-362 folds into the MRG domain; that stretch reads NRVEVKVKIP…APPEYHRKAV (172 aa). Residues 323 to 344 are interaction with RB1-2; that stretch reads LALLLNYLHDFLKYLAKNSATL.

As to quaternary structure, component of the NuA4 histone acetyltransferase complex which contains the catalytic subunit KAT5/TIP60 and the subunits EP400, TRRAP/PAF400, BRD8/SMAP, EPC1, DMAP1/DNMAP1, RUVBL1/TIP49, RUVBL2, ING3, actin, ACTL6A/BAF53A, MORF4L1/MRG15, MORF4L2/MRGX, MRGBP, YEATS4/GAS41, VPS72/YL1 and MEAF6. The NuA4 complex interacts with MYC and the adenovirus E1A protein. MORF4L1 may also participate in the formation of NuA4 related complexes which lack the KAT5/TIP60 catalytic subunit, but which include the SWI/SNF related protein SRCAP. Component of the mSin3A histone deacetylase complex, which includes SIN3A, HDAC2, ARID4B, MORF4L1, RBBP4/RbAp48, and RBBP7/RbAp46. May also interact with PHF12 and one or more as yet undefined members of the TLE (transducin-like enhancer of split) family of transcriptional repressors. Component of the SIN3B complex, which includes SIN3B, HDAC2 or HDAC1, PHF12 and MORF4L1. Interacts with RB1 and KAT8. Interacts with the N-terminus of MRFAP1. Found in a complex composed of MORF4L1, MRFAP1 and RB1. Interacts with the entire BRCA complex, which contains BRCA1, PALB2, BRCA2 and RAD51. Interacts with PALB2. Forms a complex with MSL1 and NUPR1.

Its subcellular location is the nucleus. Component of the NuA4 histone acetyltransferase (HAT) complex which is involved in transcriptional activation of select genes principally by acetylation of nucleosomal histones H4 and H2A. This modification may both alter nucleosome - DNA interactions and promote interaction of the modified histones with other proteins which positively regulate transcription. This complex may be required for the activation of transcriptional programs associated with oncogene and proto-oncogene mediated growth induction, tumor suppressor mediated growth arrest and replicative senescence, apoptosis, and DNA repair. The NuA4 complex ATPase and helicase activities seem to be, at least in part, contributed by the association of RUVBL1 and RUVBL2 with EP400. NuA4 may also play a direct role in DNA repair when directly recruited to sites of DNA damage. As part of the SIN3B complex represses transcription and counteracts the histone acetyltransferase activity of EP300 through the recognition H3K27ac marks by PHF12 and the activity of the histone deacetylase HDAC2. SIN3B complex is recruited downstream of the constitutively active genes transcriptional start sites through interaction with histones and mitigates histone acetylation and RNA polymerase II progression within transcribed regions contributing to the regulation of transcription. Required for homologous recombination repair (HRR) and resistance to mitomycin C (MMC). Involved in the localization of PALB2, BRCA2 and RAD51, but not BRCA1, to DNA-damage foci. The sequence is that of Mortality factor 4-like protein 1 (Morf4l1) from Mus musculus (Mouse).